We begin with the raw amino-acid sequence, 171 residues long: Small ribosomal subunit protein uS5 (171 aa).

An S5 DRBM domain is found at 14 to 77 (LKEKLVMVNR…EKAKKKLLKI (64 aa)).

The protein belongs to the universal ribosomal protein uS5 family. Part of the 30S ribosomal subunit. Contacts proteins S4 and S8.

Its function is as follows. With S4 and S12 plays an important role in translational accuracy. Located at the back of the 30S subunit body where it stabilizes the conformation of the head with respect to the body. The sequence is that of Small ribosomal subunit protein uS5 from Karelsulcia muelleri (strain GWSS) (Sulcia muelleri).